The sequence spans 96 residues: Toxin ParE1 (96 aa).

Belongs to the RelE toxin family. In terms of assembly, forms a ParD1(2)-ParE1(2) heterotetramer.

Toxic component of a type II toxin-antitoxin (TA) system. Its toxic effect is neutralized by coexpression with cognate antitoxin ParD1 but no other ParD or RelB antitoxin. Low levels of wild-type toxin in the absence of antitoxin decreases the rate of cell growth, and results in death or loss of colony formation abilities and greatly elongated cells. Low levels of a mutant missing the last 4 residues leads to loss of cell division while cell elongation continues. The chain is Toxin ParE1 (parE1) from Caulobacter vibrioides (strain ATCC 19089 / CIP 103742 / CB 15) (Caulobacter crescentus).